The following is a 1836-amino-acid chain: MALRGPMKRSHLRQVSAPSVDSLSVPQSQSPEALYNDERSHQDVHATPDERTIRLSSGSLERRQCSLWVHDETFSREEILFNQAAFSDLNVNVGDVIEILPVRSPGDSIHSLKSDLGARSLRDSYLESGSAHLPDPMSKFKTPLQSRCLFVVKPLPQEIKARHPKLEISVTHSVANIFGFKNRTLVNISVVDRGQCSASHVDIAFRDQFLVRSDMWRLVMSELADKIIYKGQKIVFMGSIKATVKNIFIRGKKVLSGYFSPHTIPVFRSESAKYVLFIQMSREMWDFDSEGTGDILFSRVINGFLPELFKRWANSDAKHLVTIVLFTRVEYDSSALGGPLPLSSESLRCISSPNHAPTRDFYRVVVNDMASGHWTTILDELKKDFRTFLRDVSILKMDRPDTPTVDGVKVAPKNKPAIIAGRPSTALRGNILEAIHLASAHLAYDHIDRDLVHTGTSIIVITPGSGVFEVSYESLSSTSEALADRGIAIDLVCLSPMPLHSVPLFKYKAPVERSGSSSFGDFHSTGYSPEMRQSFSFASRTPHLSPKSTMQGSFPGMTRKEHLSARSDEWNYGIPHWLDISYWNPETYREARRIAKKDPNAPIPFTVTKQSKLFVPRVRMYEIQMMGVMESEQSDISIPYLLEGQGVSRPSNAGLGLGPSGLSSRASFRRNSSYKAQLSDSLRPEPFLQNITNPRDVMLAKAKKTPNQVIAWMDQYDEAVFQPFAKRRQQRKASRPKRPSEPEVQVSNAHERLSARSVLRLREHETNSNSGDRSYPTRTIPRVSETLSVPQGPAPSKASTSPKKPALKAPSAARTPRMSRTISFALLGFGATPPRAQASTEVNVEHARAQPTSGQKKPSVGFMDTRSVESFSGSDSASISTVIDTSLRPASPHPAPQTSAMTPTRPISIKVPPRQPSEDTEPVDRTVLPESYSTTSTAIPFTGDGRRDSRTKNGPSFELTVSGGSRESSIKSPQNKALAPWVRSINPCNTSRDVLRDTSWFGRWQHAYPRPPHVAVVKWKSLKSPAILPLTTEEFPTAQELGSDYLQTPYRVFPNDDPEGVEVPKTRGILLREMISLRLSHGFQIVIGKHVAEVSGQPALETLNVFDTRSLERDGATVFLSKGNTIHRLICVDGGEIEVTRFTHRTSSTLAAGKRDGFSLYTPAMRTILSTEYELKNIKLDPTAEDYNWNYADNYVAGHRDYLFNPAQQLQFWRVRYVLIPMPLQVNNRRHLQSFNEDNEEEIHLLGINQLTHIWQRHRYVPPEEKRFESSNEKKDQNPLNIMYQTRNPSEVVAAELDRILLSDPGLDNSPAQLLPESELLERSSISLSSLAQIIQGEKGVRMMDRRWHWRLHYNCFIGFEFTTWLLQNFRDIDSREEAVQFGNELMKHGLFQHVEKRHNFRDGNYFYQISSEYRVARPESRGSWFPQKKPDKQVPSTGASENPRDSAVNGHSRSESVETPATPSKSKNKATIMLSKMMKYDVDPRKRSNRPEVIDLHYDRLHNPDNCFHIELSWMNTTPKLIEDAVLSWAATAEKFGLKLVQVPIAEGCAISRTQPFRKPYRVSLAVPPPPGPVPTVFNTATFSQLGSSDRHYYHKALLRKFDFVLDFEARSAFPADVEVSYSWGTPDYQYPQYIHRSGSLLVQITDEGDFLFLANRLVSTRLAAATREGSRYERMDRPEHLRARASTHDPLDRISPRLSPLVRPLHDIGSPISPQGQPSIDLAQLYRAPEHILNSFEEFCNDAARLEQFYSVSHARPASTKVGPAPTTVMDSSIPTLELPASVVSHHIQSPALTTRASVDGSMPSVDAMTRARNDSLSYKGSPKSGSLRPLNIN.

Positions 1–12 (MALRGPMKRSHL) are enriched in basic residues. Disordered regions lie at residues 1 to 51 (MALR…PDER), 727 to 816 (RRQQ…ARTP), and 886 to 975 (SLRP…SPQN). Polar residues predominate over residues 16–31 (SAPSVDSLSVPQSQSP). Residues 36–51 (NDERSHQDVHATPDER) show a composition bias toward basic and acidic residues. Basic residues predominate over residues 727–737 (RRQQRKASRPK). A compositionally biased stretch (basic and acidic residues) spans 749–766 (AHERLSARSVLRLREHET). A compositionally biased stretch (low complexity) spans 794 to 813 (APSKASTSPKKPALKAPSAA). Residues 962-975 (SGGSRESSIKSPQN) are compositionally biased toward polar residues. The DEP domain maps to 1337 to 1412 (GEKGVRMMDR…DGNYFYQISS (76 aa)). 2 disordered regions span residues 1421-1471 (SRGS…KNKA) and 1814-1836 (ARND…LNIN).

This sequence belongs to the IML1 family.

The protein resides in the vacuole membrane. The polypeptide is Vacuolar membrane-associated protein iml1 (iml1) (Aspergillus fumigatus (strain ATCC MYA-4609 / CBS 101355 / FGSC A1100 / Af293) (Neosartorya fumigata)).